Here is a 325-residue protein sequence, read N- to C-terminus: MQSKHRKLLLRCLLVLPLILLVDYCGLLTHLHELNFERHFHYPLNDDTGSGSASSGLDKFAYLRVPSFTAEVPVDQPARLTMLIKSAVGNSRRREAIRRTWGYEGRFSDVHLRRVFLLGTAEDSEKDVAWESREHGDILQAEFTDAYFNNTLKTMLGMRWASDQFNRSEFYLFVDDDYYVSAKNVLKFLGRGRQSHQPELLFAGHVFQTSPLRHKFSKWYVSLEEYPFDRWPPYVTAGAFILSQKALRQLYAASVHLPLFRFDDVYLGIVALKAGISLQHCDDFRFHRPAYKGPDSYSSVIASHEFGDPEEMTRVWNECRSANYA.

Residues 1–7 are Cytoplasmic-facing; sequence MQSKHRK. A helical; Signal-anchor for type II membrane protein membrane pass occupies residues 8–28; sequence LLLRCLLVLPLILLVDYCGLL. Residues 29–325 lie on the Lumenal side of the membrane; the sequence is THLHELNFER…WNECRSANYA (297 aa). 2 N-linked (GlcNAc...) asparagine glycosylation sites follow: asparagine 149 and asparagine 166.

It belongs to the glycosyltransferase 31 family.

The protein localises to the golgi apparatus membrane. It catalyses the reaction a ganglioside GM2 (d18:1(4E)) + UDP-alpha-D-galactose = a ganglioside GM1 (d18:1(4E)) + UDP + H(+). Its function is as follows. Neurogenic protein essential for the development and maintenance of epithelial structure. Required in the germline for establishing the follicular epithelium and for determining the dorsal-ventral polarity. Collaborates with Notch on the apical surface of follicle cells to mediate germline-follicle cell adhesion. Brn has a role in chorion formation. The chain is Beta-1,3-galactosyltransferase brn (brn) from Drosophila melanogaster (Fruit fly).